Reading from the N-terminus, the 347-residue chain is Metacaspase-2 (347 aa).

The propeptide occupies 1–55 (MCSLITQLCDAGQLADYVGLGWLNAVSSQPYLVQALGLQPPPRRVDVDAAFRDAK). The tract at residues 1-70 (MCSLITQLCD…QPWVATPLPG (70 aa)) is regulates substrate access to the active site. His-158 is an active-site residue. The Ca(2+) site is built by Asp-173, Asp-189, and Asp-190. Cys-213 is a catalytic residue. Asp-220 contributes to the Ca(2+) binding site.

The protein belongs to the peptidase C14B family. In terms of assembly, monomer. In terms of processing, auto-proteolytic cleavage of the propeptide after Lys-55 and between the large and small subunits after Lys-268 is required for catalytic activity towards large protein substrates but is dispensable towards small oligopeptide substrates. After processing, the propeptide and the large and small subunits remain associated by non-covalent bonds. In vivo, the unprocessed enzyme appears to be the predominant form.

The protein localises to the recycling endosome. With respect to regulation, activated by Ca(2+). In response to calcium binding, the 280-loop, a disordered loop consisting of residues 269-275, undergoes a conformational change which stabilizes substrates in the active site. The binding to the substrate triggers the release of the N-terminal region resulting in the activation of the enzyme. Proteolytic cleavage is required for catalytic activity towards large protein substrates. Cysteine protease that cleaves specifically after arginine or lysine residues. In Trypanosoma brucei brucei (strain 927/4 GUTat10.1), this protein is Metacaspase-2.